Reading from the N-terminus, the 313-residue chain is Methionyl-tRNA formyltransferase (313 aa).

S109–P112 serves as a coordination point for (6S)-5,6,7,8-tetrahydrofolate.

This sequence belongs to the Fmt family.

The enzyme catalyses L-methionyl-tRNA(fMet) + (6R)-10-formyltetrahydrofolate = N-formyl-L-methionyl-tRNA(fMet) + (6S)-5,6,7,8-tetrahydrofolate + H(+). Its function is as follows. Attaches a formyl group to the free amino group of methionyl-tRNA(fMet). The formyl group appears to play a dual role in the initiator identity of N-formylmethionyl-tRNA by promoting its recognition by IF2 and preventing the misappropriation of this tRNA by the elongation apparatus. The polypeptide is Methionyl-tRNA formyltransferase (Thermotoga maritima (strain ATCC 43589 / DSM 3109 / JCM 10099 / NBRC 100826 / MSB8)).